Here is a 493-residue protein sequence, read N- to C-terminus: Farnesoate epoxidase (493 aa).

The first 24 residues, 1 to 24 (MLALIVLCFILFFYIISRRHRGLC), serve as a signal peptide directing secretion. Position 433 (Cys-433) interacts with heme.

The protein belongs to the cytochrome P450 family. Heme is required as a cofactor. Constitutively expressed in corpora allata from the first instar larval to adult stages.

The enzyme catalyses (2E,6E)-farnesoate + reduced [NADPH--hemoprotein reductase] + O2 = juvenile hormone III carboxylate + oxidized [NADPH--hemoprotein reductase] + H2O + H(+). Catalyzes the conversion of farnesoate to juvenile hormone III acid in juvenile hormone biosynthesis. The polypeptide is Farnesoate epoxidase (Bombyx mori (Silk moth)).